The primary structure comprises 341 residues: NADH-quinone oxidoreductase subunit H 1 (341 aa).

The next 8 membrane-spanning stretches (helical) occupy residues 13-33 (LVVI…IAYI), 82-102 (GVFL…WAVI), 115-135 (VGVL…IMAG), 161-181 (IGFV…TAIV), 190-210 (LLGW…VSAL), 248-268 (YVAI…GWLP), 277-297 (WVPG…LFAM), and 317-337 (VFLP…QFAG).

This sequence belongs to the complex I subunit 1 family. As to quaternary structure, NDH-1 is composed of 14 different subunits. Subunits NuoA, H, J, K, L, M, N constitute the membrane sector of the complex.

The protein resides in the cell inner membrane. It carries out the reaction a quinone + NADH + 5 H(+)(in) = a quinol + NAD(+) + 4 H(+)(out). Functionally, NDH-1 shuttles electrons from NADH, via FMN and iron-sulfur (Fe-S) centers, to quinones in the respiratory chain. The immediate electron acceptor for the enzyme in this species is believed to be ubiquinone. Couples the redox reaction to proton translocation (for every two electrons transferred, four hydrogen ions are translocated across the cytoplasmic membrane), and thus conserves the redox energy in a proton gradient. This subunit may bind ubiquinone. The sequence is that of NADH-quinone oxidoreductase subunit H 1 from Rhodopseudomonas palustris (strain BisB18).